We begin with the raw amino-acid sequence, 411 residues long: MGRKKSCHVHNAPSDDDIMFSQDHKPKRIYQLWPGNNRFYCGGRLVFGPDASSLLLTTAMIGGPALTFCIRMVFLIGKRYPLFHSLILLGALLLTVLDFTFLFLTSSRDPGIIPRNKEAPEAEGLDMITQSSEWVNNKLGNTKIPRTKDILVNGYTVKVKFCDTCLLYRPPRASHCSICNNCVQRFDHHCPWVGQCIALRNYPYFICFISTSTLLCLYVFVFSWVSMLEVHGKMLLMVITNDLVFVVLILYCFVVVWFVGGLTVFHLYLICTNQTTYENFRYRYDKKENPYGKGLFKNLYELFFARIPPPMINFRDWAPEEPDEEVGSIASELDRTFGPRGDKYDMEMEIGGCKNSKVGLQLHTLEYDNNNSSEETVKKKGVSEETAAFYIPGIQEPANITRNSSIDVRSR.

The next 2 membrane-spanning stretches (helical) occupy residues 56-76 (LTTAMIGGPALTFCIRMVFLI) and 85-105 (SLILLGALLLTVLDFTFLFLT). The DHHC domain maps to 160–210 (KFCDTCLLYRPPRASHCSICNNCVQRFDHHCPWVGQCIALRNYPYFICFIS). The active-site S-palmitoyl cysteine intermediate is the Cys190. Helical transmembrane passes span 205–225 (FICFISTSTLLCLYVFVFSWV) and 245–265 (FVVLILYCFVVVWFVGGLTVF). Residue Ser405 is modified to Phosphoserine.

Belongs to the DHHC palmitoyltransferase family. Expressed in flowers and pollen.

The protein localises to the cytoplasmic vesicle membrane. The catalysed reaction is L-cysteinyl-[protein] + hexadecanoyl-CoA = S-hexadecanoyl-L-cysteinyl-[protein] + CoA. Functionally, palmitoyl acyltransferase. In Arabidopsis thaliana (Mouse-ear cress), this protein is Probable protein S-acyltransferase 2 (PAT02).